Consider the following 252-residue polypeptide: Two-component response regulator ORR2 (252 aa).

One can recognise a Response regulatory domain in the interval 7-157 (RVLVVDDSPV…DVQRLRKCSG (151 aa)). A 4-aspartylphosphate modification is found at aspartate 90.

The protein belongs to the ARR family. Type-A subfamily. Two-component system major event consists of a His-to-Asp phosphorelay between a sensor histidine kinase (HK) and a response regulator (RR). In plants, the His-to-Asp phosphorelay involves an additional intermediate named Histidine-containing phosphotransfer protein (HPt). This multistep phosphorelay consists of a His-Asp-His-Asp sequential transfer of a phosphate group between first a His and an Asp of the HK protein, followed by the transfer to a conserved His of the HPt protein and finally the transfer to an Asp in the receiver domain of the RR protein. In terms of tissue distribution, expressed in mature leaves and flowers, and at low levels in roots and shoots.

Functions as a response regulator involved in His-to-Asp phosphorelay signal transduction system. Phosphorylation of the Asp residue in the receiver domain activates the ability of the protein to promote the transcription of target genes. Type-A response regulators seem to act as negative regulators of the cytokinin signaling. The polypeptide is Two-component response regulator ORR2 (Oryza sativa subsp. indica (Rice)).